A 154-amino-acid chain; its full sequence is Transcriptional repressor NrdR (154 aa).

A zinc finger spans residues 3-34 (CPFCGANDTKVIDSRLVAEGEQVRRRRECVAC). The ATP-cone domain occupies 49–139 (PRLIKQDGTR…VYRRFQDLDE (91 aa)).

This sequence belongs to the NrdR family. Requires Zn(2+) as cofactor.

Negatively regulates transcription of bacterial ribonucleotide reductase nrd genes and operons by binding to NrdR-boxes. The polypeptide is Transcriptional repressor NrdR (Pseudomonas putida (strain GB-1)).